A 580-amino-acid chain; its full sequence is Putative multidrug export ATP-binding/permease protein YgaD (580 aa).

At 1 to 17 (MGVMKRYMQFVKPYKKQ) the chain is on the cytoplasmic side. Residues 18–38 (IFVTVLIGIVKFSIPLALPLL) traverse the membrane as a helical segment. The ABC transmembrane type-1 domain maps to 19–307 (FVTVLIGIVK…LINSSTTLTQ (289 aa)). Over 39 to 57 (LKYVVDDIIQGGGTASDKT) the chain is Extracellular. Residues 58-78 (TSLFTIMAIMFALFLILRPPV) traverse the membrane as a helical segment. Residues 79-135 (EYYRQYFAQWTASKVLYDIRAKLFDHIQKLSLRFYANTRTGEVISRVINDVEQTKDF) are Cytoplasmic-facing. The helical transmembrane segment at 136-156 (VITGLMNIWLDMLTILIVISI) threads the bilayer. Residues 157–163 (MLTLDVK) are Extracellular-facing. The helical transmembrane segment at 164–184 (LTLISIVLFPLYGISVKYFYG) threads the bilayer. Topologically, residues 185–243 (RLRKLTRERSQALAQVQGHLHERIQGMPVIRSFAIEDHEQAQFNEKNGHFLDKAIRHTN) are cytoplasmic. The chain crosses the membrane as a helical span at residues 244-263 (WNAKTFAVVNTITDLAPLIV). Residues 264–268 (IACAG) are Extracellular-facing. Residues 269–288 (YFVINGPLTVGTMVAFVGYI) traverse the membrane as a helical segment. At 289-580 (DRMYNPVRRL…KHLFTIQNLN (292 aa)) the chain is on the cytoplasmic side. Residues 341–576 (VEFQNVSFQY…ESQYKHLFTI (236 aa)) form the ABC transporter domain. 375-382 (GMSGGGKS) is an ATP binding site.

It belongs to the ABC transporter superfamily. As to quaternary structure, homodimer.

It localises to the cell membrane. May be involved in multidrug export. Transmembrane domains (TMD) form a pore in the cell membrane and the ATP-binding domain (NBD) is responsible for energy generation. The polypeptide is Putative multidrug export ATP-binding/permease protein YgaD (ygaD) (Bacillus subtilis (strain 168)).